The chain runs to 698 residues: Trafficking protein particle complex III-specific subunit 85 (698 aa).

Disordered regions lie at residues 82–125 (VGQH…LFQR) and 678–698 (VDSA…SFIG). A compositionally biased stretch (basic and acidic residues) spans 678 to 689 (VDSAPRPSEKNL).

The protein belongs to the TRS85 family. In terms of assembly, part of the multisubunit TRAPP (transport protein particle) III complex composed of BET3, BET5, TRS20, TRS23, TRS31, TRS33 and TRS85.

It localises to the preautophagosomal structure. Specific subunit of the TRAPP III complex that acts as an autophagy-specific guanine nucleotide exchange factor (GEF) for YPT1. TRS85 directs the TRAPP III complex to the phagophore assembly site (PAS) that is involved in autophagosome formation. Required for membrane expansion during autophagy and the CVT pathway. Required for sporulation. Has a role late in meiosis following DNA replication. The polypeptide is Trafficking protein particle complex III-specific subunit 85 (TRS85) (Saccharomyces cerevisiae (strain ATCC 204508 / S288c) (Baker's yeast)).